The primary structure comprises 331 residues: Polyprenyl transferase mpaA' (331 aa).

The next 8 membrane-spanning stretches (helical) occupy residues 27–47 (MPYY…ALKL), 56–76 (IEFI…LCGA), 127–147 (LILD…SIML), 159–179 (VFVY…ITGW), 190–210 (GDII…CVYF), 240–260 (LFLA…ISTI), 264–284 (WLWV…IAQF), and 295–315 (IHWD…VEVG).

The protein belongs to the UbiA prenyltransferase family. The cofactor is Mg(2+).

It localises to the golgi apparatus membrane. It carries out the reaction 5,7-dihydroxy-4-methylphthalide + (2E,6E)-farnesyl diphosphate = 4-farnesyl-3,5-dihydroxy-6-methylphthalide + diphosphate. Its pathway is secondary metabolite biosynthesis; terpenoid biosynthesis. Functionally, polyprenyl transferase; part of the gene cluster that mediates the biosynthesis of mycophenolic acid (MPA), the first isolated antibiotic natural product in the world obtained from a culture of Penicillium brevicompactum in 1893. MpaA' is a Golgi apparatus-associated enzyme that catalyzes the prenylation of 5,7-dihydroxy-4,6-dimethylphthalide (DHMP) to yield farnesyl-DHMP (FDHMP). The first step of the pathway is the synthesis of 5-methylorsellinic acid (5MOA) by the cytosolic polyketide synthase mpaC. 5MOA is then converted to the phthalide compound 5,7-dihydroxy-4,6-dimethylphthalide (DHMP) by the endoplasmic reticulum-bound cytochrome P450 monooxygenase mpaDE. MpaDE first catalyzes hydroxylation of 5-MOA to 4,6-dihydroxy-2-(hydroxymethyl)-3-methylbenzoic acid (DHMB). MpaDE then acts as a lactone synthase that catalyzes the ring closure to convert DHMB into DHMP. The next step is the prenylation of DHMP by the Golgi apparatus-associated prenyltransferase mpaA to yield farnesyl-DHMP (FDHMP). The ER-bound oxygenase mpaB then mediates the oxidative cleavage the C19-C20 double bond in FDHMP to yield FDHMP-3C via a mycophenolic aldehyde intermediate. The O-methyltransferase mpaG catalyzes the methylation of FDHMP-3C to yield MFDHMP-3C. After the cytosolic methylation of FDHMP-3C, MFDHMP-3C enters into peroxisomes probably via free diffusion due to its low molecular weight. Upon a peroxisomal CoA ligation reaction, catalyzed by a beta-oxidation component enzyme acyl-CoA ligase ACL891, MFDHMP-3C-CoA would then be restricted to peroxisomes for the following beta-oxidation pathway steps. The peroxisomal beta-oxidation machinery than converts MFDHMP-3C-CoA into MPA_CoA, via a beta-oxidation chain-shortening process. Finally mpaH acts as a peroxisomal acyl-CoA hydrolase with high substrate specificity toward MPA-CoA to release the final product MPA. The chain is Polyprenyl transferase mpaA' from Penicillium brevicompactum.